Here is a 293-residue protein sequence, read N- to C-terminus: Glycine betaine-binding protein OpuAC (293 aa).

An N-terminal signal peptide occupies residues 1 to 20 (MLKKIIGIGVSAMLALSLAA). The N-palmitoyl cysteine moiety is linked to residue Cys-21. Cys-21 is lipidated: S-diacylglycerol cysteine.

As to quaternary structure, the complex is composed of two ATP-binding proteins (OpuAA), two transmembrane proteins (OpuAB) and a solute-binding protein (OpuAC). Interacts with FloT.

The protein localises to the cell membrane. It is found in the membrane raft. Involved in a multicomponent binding-protein-dependent transport system for glycine betaine. In Bacillus subtilis (strain 168), this protein is Glycine betaine-binding protein OpuAC (opuAC).